The sequence spans 184 residues: dITP/XTP pyrophosphatase (184 aa).

Residue 5 to 10 coordinates substrate; that stretch reads SSNRHK. 2 residues coordinate Mg(2+): Glu-33 and Asp-62. Asp-62 acts as the Proton acceptor in catalysis. Substrate is bound by residues Ser-63, 136-139, Lys-158, and 163-164; these read WGFD and HR.

This sequence belongs to the HAM1 NTPase family. In terms of assembly, homodimer. Requires Mg(2+) as cofactor.

The enzyme catalyses XTP + H2O = XMP + diphosphate + H(+). The catalysed reaction is dITP + H2O = dIMP + diphosphate + H(+). It carries out the reaction ITP + H2O = IMP + diphosphate + H(+). In terms of biological role, pyrophosphatase that catalyzes the hydrolysis of nucleoside triphosphates to their monophosphate derivatives, with a high preference for the non-canonical purine nucleotides XTP (xanthosine triphosphate), dITP (deoxyinosine triphosphate) and ITP. Seems to function as a house-cleaning enzyme that removes non-canonical purine nucleotides from the nucleotide pool, thus preventing their incorporation into DNA/RNA and avoiding chromosomal lesions. This is dITP/XTP pyrophosphatase from Korarchaeum cryptofilum (strain OPF8).